The sequence spans 301 residues: Lycopene elongase/hydratase (301 aa).

The segment at 1 to 20 (MSADMAAQSESGEGGDDGRA) is disordered. 9 consecutive transmembrane segments (helical) span residues 39–59 (FWLY…SALA), 61–81 (LFGL…NVFL), 110–130 (PVNT…FAVA), 133–153 (VAWP…APPF), 160–180 (LLDS…YAAV), 186–206 (PMLA…FSAI), 229–249 (TYWY…AVDL), 252–272 (GALL…GVDV), and 276–296 (YWWY…GALW).

It belongs to the UbiA prenyltransferase family.

The protein localises to the cell membrane. It carries out the reaction all-trans-lycopene + dimethylallyl diphosphate + H2O = dihydroisopentenyldehydrorhodopin + diphosphate. The catalysed reaction is isopentenyldehydrorhodopin + dimethylallyl diphosphate + H2O = dihydrobisanhydrobacterioruberin + diphosphate. The protein operates within carotenoid biosynthesis. In terms of biological role, involved in the biosynthesis of the acyclic C50 carotenoid bacterioruberin (BR). Acts as a bifunctional elongase/hydratase that catalyzes the elongation of lycopene by attaching a C(5) isoprene unit at C-2, as well as the hydroxylation of the previous end of the molecule. The enzyme acts at both ends of the substrate, and catalyzes the conversion of lycopene to the C(45) intermediate dihydroisopentenyldehydrorhodopin (DH-IDR) and the conversion of isopentenyldehydrorhodopin (IDR) to the C(50) carotenoid dihydrobisanhydrobacterioruberin (DH-BABR). Can also catalyze the conversion of lycopene to tetrahydrobisanhydrobacterioruberin (TH-BABR). The protein is Lycopene elongase/hydratase of Haloferax volcanii (strain ATCC 29605 / DSM 3757 / JCM 8879 / NBRC 14742 / NCIMB 2012 / VKM B-1768 / DS2) (Halobacterium volcanii).